Consider the following 302-residue polypeptide: NADH-cytochrome b5 reductase 2 (302 aa).

A propeptide spans 1-41 (MFSRLSRSHSKALPIALGTVAIAAATAFYFANRNQHSFVFN) (removed in mature form). A helical membrane pass occupies residues 12–32 (ALPIALGTVAIAAATAFYFAN). An FAD-binding FR-type domain is found at 51–155 (DKWIDLPISK…KGPIMKWKWQ (105 aa)). 158 to 193 (QFKSITLLGAGTGINPLYQLAHHIVENPNDKTKVNL) is an FAD binding site. At Ser-278 the chain carries Phosphoserine.

Belongs to the flavoprotein pyridine nucleotide cytochrome reductase family. FAD is required as a cofactor. Post-translationally, there are two isoforms of NADH-cytochrome b5 reductase, a 34 kDa form (p34) and a 32 kDa form (p32). The p34 form becomes firmly anchored to the outer mitochondrial membrane after an incomplete translocation arrest. The p32 form is formed after translocation of the p34 precursor to the inner mitochondrial membrane, where it is processed by mitochondrial inner membrane peptidase (IMP) complex and released to the intermembrane space.

It localises to the mitochondrion intermembrane space. The protein resides in the mitochondrion outer membrane. The catalysed reaction is 2 Fe(III)-[cytochrome b5] + NADH = 2 Fe(II)-[cytochrome b5] + NAD(+) + H(+). Its function is as follows. The outer membrane form may mediate the reduction of outer membrane cytochrome b5, and the soluble inter-membrane space form may transfer electrons from external NADH to cytochrome c, thereby mediating an antimycin-insensitive, energy-coupled oxidation of external NADH by yeast mitochondria. Involved in the reduction of D-erythroascorbyl free radicals. This Saccharomyces cerevisiae (strain YJM789) (Baker's yeast) protein is NADH-cytochrome b5 reductase 2 (MCR1).